The sequence spans 293 residues: Cytidine deaminase 6 (293 aa).

2 CMP/dCMP-type deaminase domains span residues Arg16 to Asp147 and Glu178 to Asn293. Asn57–Glu59 lines the substrate pocket. His70 is a binding site for Zn(2+). Catalysis depends on Glu72, which acts as the Proton donor. Cys103 and Cys106 together coordinate Zn(2+).

This sequence belongs to the cytidine and deoxycytidylate deaminase family. Homodimer. Zn(2+) is required as a cofactor.

It catalyses the reaction cytidine + H2O + H(+) = uridine + NH4(+). It carries out the reaction 2'-deoxycytidine + H2O + H(+) = 2'-deoxyuridine + NH4(+). In terms of biological role, this enzyme scavenges exogenous and endogenous cytidine and 2'-deoxycytidine for UMP synthesis. This chain is Cytidine deaminase 6 (CDA6), found in Arabidopsis thaliana (Mouse-ear cress).